The sequence spans 96 residues: Aspartyl/glutamyl-tRNA(Asn/Gln) amidotransferase subunit C (96 aa).

It belongs to the GatC family. As to quaternary structure, heterotrimer of A, B and C subunits.

It catalyses the reaction L-glutamyl-tRNA(Gln) + L-glutamine + ATP + H2O = L-glutaminyl-tRNA(Gln) + L-glutamate + ADP + phosphate + H(+). The enzyme catalyses L-aspartyl-tRNA(Asn) + L-glutamine + ATP + H2O = L-asparaginyl-tRNA(Asn) + L-glutamate + ADP + phosphate + 2 H(+). Allows the formation of correctly charged Asn-tRNA(Asn) or Gln-tRNA(Gln) through the transamidation of misacylated Asp-tRNA(Asn) or Glu-tRNA(Gln) in organisms which lack either or both of asparaginyl-tRNA or glutaminyl-tRNA synthetases. The reaction takes place in the presence of glutamine and ATP through an activated phospho-Asp-tRNA(Asn) or phospho-Glu-tRNA(Gln). This Symbiobacterium thermophilum (strain DSM 24528 / JCM 14929 / IAM 14863 / T) protein is Aspartyl/glutamyl-tRNA(Asn/Gln) amidotransferase subunit C.